The primary structure comprises 122 residues: Large ribosomal subunit protein uL14c (122 aa).

This sequence belongs to the universal ribosomal protein uL14 family. In terms of assembly, part of the 50S ribosomal subunit.

It localises to the plastid. The protein localises to the chloroplast. Functionally, binds to 23S rRNA. This Staurastrum punctulatum (Green alga) protein is Large ribosomal subunit protein uL14c.